Reading from the N-terminus, the 446-residue chain is Bifunctional protein GlmU (446 aa).

Residues 1–229 (MTEKPVALIV…EAETLGINTR (229 aa)) form a pyrophosphorylase region. Residues 11 to 14 (LAAG), lysine 25, glutamine 78, 83 to 84 (GT), 106 to 108 (YGD), glycine 141, glutamate 155, asparagine 170, and asparagine 227 each bind UDP-N-acetyl-alpha-D-glucosamine. Aspartate 108 is a binding site for Mg(2+). Residue asparagine 227 participates in Mg(2+) binding. A linker region spans residues 230–250 (AELAAAEAAFQVRARARALED). The N-acetyltransferase stretch occupies residues 251-446 (GVTMTDPATV…MQALRQKKGN (196 aa)). Residues arginine 316 and lysine 334 each coordinate UDP-N-acetyl-alpha-D-glucosamine. The Proton acceptor role is filled by histidine 346. Positions 349 and 360 each coordinate UDP-N-acetyl-alpha-D-glucosamine. Residues alanine 363, 369-370 (NY), serine 388, serine 406, and arginine 423 contribute to the acetyl-CoA site.

The protein in the N-terminal section; belongs to the N-acetylglucosamine-1-phosphate uridyltransferase family. This sequence in the C-terminal section; belongs to the transferase hexapeptide repeat family. Homotrimer. It depends on Mg(2+) as a cofactor.

Its subcellular location is the cytoplasm. The catalysed reaction is alpha-D-glucosamine 1-phosphate + acetyl-CoA = N-acetyl-alpha-D-glucosamine 1-phosphate + CoA + H(+). It carries out the reaction N-acetyl-alpha-D-glucosamine 1-phosphate + UTP + H(+) = UDP-N-acetyl-alpha-D-glucosamine + diphosphate. Its pathway is nucleotide-sugar biosynthesis; UDP-N-acetyl-alpha-D-glucosamine biosynthesis; N-acetyl-alpha-D-glucosamine 1-phosphate from alpha-D-glucosamine 6-phosphate (route II): step 2/2. It functions in the pathway nucleotide-sugar biosynthesis; UDP-N-acetyl-alpha-D-glucosamine biosynthesis; UDP-N-acetyl-alpha-D-glucosamine from N-acetyl-alpha-D-glucosamine 1-phosphate: step 1/1. The protein operates within bacterial outer membrane biogenesis; LPS lipid A biosynthesis. Functionally, catalyzes the last two sequential reactions in the de novo biosynthetic pathway for UDP-N-acetylglucosamine (UDP-GlcNAc). The C-terminal domain catalyzes the transfer of acetyl group from acetyl coenzyme A to glucosamine-1-phosphate (GlcN-1-P) to produce N-acetylglucosamine-1-phosphate (GlcNAc-1-P), which is converted into UDP-GlcNAc by the transfer of uridine 5-monophosphate (from uridine 5-triphosphate), a reaction catalyzed by the N-terminal domain. The sequence is that of Bifunctional protein GlmU from Paracoccus denitrificans (strain Pd 1222).